Here is a 396-residue protein sequence, read N- to C-terminus: Cathepsin E (396 aa).

An N-terminal signal peptide occupies residues 1-19; that stretch reads MKTLPLLLLLLLDLGQAQG. The propeptide at 20-53 is activation peptide; that stretch reads TLDRVPLRRQPSLRKKLRAQGQLSEFWKAHKVDM. In terms of domain architecture, Peptidase A1 spans 78–392; the sequence is YFGTISIGSP…DRGSNRVGLA (315 aa). Asn90 carries N-linked (GlcNAc...) asparagine glycosylation. Asp96 is an active-site residue. 2 cysteine pairs are disulfide-bonded: Cys109/Cys114 and Cys272/Cys276. Residue Asp281 is part of the active site. A disulfide bridge links Cys314 with Cys351.

Belongs to the peptidase A1 family. As to quaternary structure, homodimer; disulfide-linked. Glycosylated. The nature of the carbohydrate chain varies between cell types.

The protein localises to the endosome. The enzyme catalyses Similar to cathepsin D, but slightly broader specificity.. Its function is as follows. May have a role in immune function. Probably involved in the processing of antigenic peptides during MHC class II-mediated antigen presentation. May play a role in activation-induced lymphocyte depletion in the thymus, and in neuronal degeneration and glial cell activation in the brain. This is Cathepsin E (CTSE) from Oryctolagus cuniculus (Rabbit).